The following is a 266-amino-acid chain: Proteasome subunit beta type-7 (266 aa).

A propeptide spanning residues 1-33 is cleaved from the precursor; that stretch reads MNHDPFSWGRPADSTYGAYNTQIANAGASPMVN.

Belongs to the peptidase T1B family. The 26S proteasome consists of a 20S proteasome core and two 19S regulatory subunits. The 20S proteasome core is composed of 28 subunits that are arranged in four stacked rings, resulting in a barrel-shaped structure. The two end rings are each formed by seven alpha subunits, and the two central rings are each formed by seven beta subunits. The catalytic chamber with the active sites is on the inside of the barrel. Interacts with CIC1.

The protein resides in the cytoplasm. It localises to the nucleus. Functionally, non-catalytic component of the proteasome which degrades poly-ubiquitinated proteins in the cytoplasm and in the nucleus. It is essential for the regulated turnover of proteins and for the removal of misfolded proteins. The proteasome is a multicatalytic proteinase complex that is characterized by its ability to cleave peptides with Arg, Phe, Tyr, Leu, and Glu adjacent to the leaving group at neutral or slightly basic pH. It has an ATP-dependent proteolytic activity. PRE3 and PRE4 are necessary for the peptidyl-glutamyl-peptide-hydrolyzing activity. This Saccharomyces cerevisiae (strain ATCC 204508 / S288c) (Baker's yeast) protein is Proteasome subunit beta type-7 (PRE4).